The following is a 409-amino-acid chain: Elongation factor Tu, chloroplastic (409 aa).

Residues 10–214 form the tr-type G domain; the sequence is KPHVNIGTIG…AVDTYIPTPE (205 aa). The segment at 19–26 is G1; sequence GHVDHGKT. 19 to 26 is a GTP binding site; sequence GHVDHGKT. T26 contacts Mg(2+). Residues 60 to 64 are G2; it reads GITIN. Positions 81-84 are G3; sequence DCPG. GTP contacts are provided by residues 81 to 85 and 136 to 139; these read DCPGH and NKED. Positions 136–139 are G4; it reads NKED. Residues 174–176 form a G5 region; sequence SAL.

Belongs to the TRAFAC class translation factor GTPase superfamily. Classic translation factor GTPase family. EF-Tu/EF-1A subfamily.

It is found in the plastid. The protein resides in the chloroplast. The catalysed reaction is GTP + H2O = GDP + phosphate + H(+). GTP hydrolase that promotes the GTP-dependent binding of aminoacyl-tRNA to the A-site of ribosomes during protein biosynthesis. In Pyropia yezoensis (Susabi-nori), this protein is Elongation factor Tu, chloroplastic (tufA).